The following is a 205-amino-acid chain: Methylamine utilization protein MauD (205 aa).

The helical transmembrane segment at 5-25 (FLIASNVLLWLALIGCAVLML) threads the bilayer. The Thioredoxin domain maps to 50-184 (PDVGDAAPTF…LESLLEADKS (135 aa)).

It is found in the membrane. It functions in the pathway one-carbon metabolism; methylamine degradation. May be specifically involved in the processing, transport, and/or maturation of the MADH beta-subunit. The polypeptide is Methylamine utilization protein MauD (mauD) (Methylorubrum extorquens (strain ATCC 14718 / DSM 1338 / JCM 2805 / NCIMB 9133 / AM1) (Methylobacterium extorquens)).